A 258-amino-acid chain; its full sequence is Isoprenyl transferase 2 (258 aa).

Pro residues predominate over residues 1-18 (MNFPPIHPSTPKMTPPDL). Residues 1 to 21 (MNFPPIHPSTPKMTPPDLDPQ) are disordered. D32 is an active-site residue. D32 provides a ligand contact to Mg(2+). Residues 33 to 36 (GNGR), W37, R45, H49, and 77 to 79 (STE) each bind substrate. Residue N80 is the Proton acceptor of the active site. Residues W81, R83, R200, and 206 to 208 (RLS) each bind substrate. Mg(2+) is bound at residue E219.

It belongs to the UPP synthase family. As to quaternary structure, homodimer. The cofactor is Mg(2+).

Catalyzes the condensation of isopentenyl diphosphate (IPP) with allylic pyrophosphates generating different type of terpenoids. The sequence is that of Isoprenyl transferase 2 from Nostoc sp. (strain PCC 7120 / SAG 25.82 / UTEX 2576).